The primary structure comprises 379 residues: Homoserine O-succinyltransferase (379 aa).

Residues 51-360 (NAVLICHALS…DAPQGHDAFL (310 aa)) enclose the AB hydrolase-1 domain. Ser-157 functions as the Nucleophile in the catalytic mechanism. Residue Arg-227 coordinates substrate. Catalysis depends on residues Asp-323 and His-356. Asp-357 contributes to the substrate binding site.

The protein belongs to the AB hydrolase superfamily. MetX family. As to quaternary structure, homodimer.

It is found in the cytoplasm. It carries out the reaction L-homoserine + succinyl-CoA = O-succinyl-L-homoserine + CoA. The protein operates within amino-acid biosynthesis; L-methionine biosynthesis via de novo pathway; O-succinyl-L-homoserine from L-homoserine: step 1/1. Transfers a succinyl group from succinyl-CoA to L-homoserine, forming succinyl-L-homoserine. The chain is Homoserine O-succinyltransferase from Pseudomonas savastanoi pv. phaseolicola (strain 1448A / Race 6) (Pseudomonas syringae pv. phaseolicola (strain 1448A / Race 6)).